Consider the following 340-residue polypeptide: Ketol-acid reductoisomerase (NADP(+)) (340 aa).

Residues 5–182 enclose the KARI N-terminal Rossmann domain; it reads MEYEKDVKVA…GSARVGLLET (178 aa). NADP(+)-binding positions include 26-29, Arg-49, Ser-53, and 83-86; these read YGSQ and DEIQ. The active site involves His-108. Gly-134 is a binding site for NADP(+). Positions 183–328 constitute a KARI C-terminal knotted domain; sequence TYKEETEEDL…AELRKAMPFV (146 aa). Residues Asp-191, Glu-195, Glu-227, and Glu-231 each contribute to the Mg(2+) site. A substrate-binding site is contributed by Ser-252.

Belongs to the ketol-acid reductoisomerase family. It depends on Mg(2+) as a cofactor.

It carries out the reaction (2R)-2,3-dihydroxy-3-methylbutanoate + NADP(+) = (2S)-2-acetolactate + NADPH + H(+). The catalysed reaction is (2R,3R)-2,3-dihydroxy-3-methylpentanoate + NADP(+) = (S)-2-ethyl-2-hydroxy-3-oxobutanoate + NADPH + H(+). Its pathway is amino-acid biosynthesis; L-isoleucine biosynthesis; L-isoleucine from 2-oxobutanoate: step 2/4. It participates in amino-acid biosynthesis; L-valine biosynthesis; L-valine from pyruvate: step 2/4. Functionally, involved in the biosynthesis of branched-chain amino acids (BCAA). Catalyzes an alkyl-migration followed by a ketol-acid reduction of (S)-2-acetolactate (S2AL) to yield (R)-2,3-dihydroxy-isovalerate. In the isomerase reaction, S2AL is rearranged via a Mg-dependent methyl migration to produce 3-hydroxy-3-methyl-2-ketobutyrate (HMKB). In the reductase reaction, this 2-ketoacid undergoes a metal-dependent reduction by NADPH to yield (R)-2,3-dihydroxy-isovalerate. The polypeptide is Ketol-acid reductoisomerase (NADP(+)) (Streptococcus sanguinis (strain SK36)).